We begin with the raw amino-acid sequence, 394 residues long: Ribulose bisphosphate carboxylase large chain (394 aa).

Lysine 5 carries the post-translational modification N6,N6,N6-trimethyllysine. Substrate is bound by residues asparagine 114 and threonine 164. Catalysis depends on lysine 166, which acts as the Proton acceptor. Lysine 168 contacts substrate. The Mg(2+) site is built by lysine 192, aspartate 194, and glutamate 195. Lysine 192 bears the N6-carboxylysine mark. The Proton acceptor role is filled by histidine 285. Arginine 286, histidine 318, and serine 370 together coordinate substrate.

Belongs to the RuBisCO large chain family. Type I subfamily. In terms of assembly, heterohexadecamer of 8 large chains and 8 small chains; disulfide-linked. The disulfide link is formed within the large subunit homodimers. The cofactor is Mg(2+). Post-translationally, the disulfide bond which can form in the large chain dimeric partners within the hexadecamer appears to be associated with oxidative stress and protein turnover.

The protein localises to the plastid. The protein resides in the chloroplast. The catalysed reaction is 2 (2R)-3-phosphoglycerate + 2 H(+) = D-ribulose 1,5-bisphosphate + CO2 + H2O. It catalyses the reaction D-ribulose 1,5-bisphosphate + O2 = 2-phosphoglycolate + (2R)-3-phosphoglycerate + 2 H(+). RuBisCO catalyzes two reactions: the carboxylation of D-ribulose 1,5-bisphosphate, the primary event in carbon dioxide fixation, as well as the oxidative fragmentation of the pentose substrate in the photorespiration process. Both reactions occur simultaneously and in competition at the same active site. In Alisma plantago-aquatica (Common water-plantain), this protein is Ribulose bisphosphate carboxylase large chain (rbcL).